We begin with the raw amino-acid sequence, 390 residues long: 1-deoxy-D-xylulose 5-phosphate reductoisomerase (390 aa).

NADPH-binding residues include Thr-10, Gly-11, Ser-12, Ile-13, Gly-36, Arg-37, Asn-38, and Asn-121. Lys-122 is a binding site for 1-deoxy-D-xylulose 5-phosphate. Glu-123 is a binding site for NADPH. Mn(2+) is bound at residue Asp-147. 4 residues coordinate 1-deoxy-D-xylulose 5-phosphate: Ser-148, Glu-149, Ser-173, and His-196. Position 149 (Glu-149) interacts with Mn(2+). Residue Gly-202 participates in NADPH binding. The 1-deoxy-D-xylulose 5-phosphate site is built by Ser-209, Asn-214, Lys-215, and Glu-218. Glu-218 serves as a coordination point for Mn(2+). Positions Ala-367 to Arg-390 are disordered. Basic and acidic residues predominate over residues Glu-370–Val-380.

It belongs to the DXR family. Requires Mg(2+) as cofactor. It depends on Mn(2+) as a cofactor.

The enzyme catalyses 2-C-methyl-D-erythritol 4-phosphate + NADP(+) = 1-deoxy-D-xylulose 5-phosphate + NADPH + H(+). The protein operates within isoprenoid biosynthesis; isopentenyl diphosphate biosynthesis via DXP pathway; isopentenyl diphosphate from 1-deoxy-D-xylulose 5-phosphate: step 1/6. Functionally, catalyzes the NADPH-dependent rearrangement and reduction of 1-deoxy-D-xylulose-5-phosphate (DXP) to 2-C-methyl-D-erythritol 4-phosphate (MEP). The protein is 1-deoxy-D-xylulose 5-phosphate reductoisomerase of Anaeromyxobacter dehalogenans (strain 2CP-1 / ATCC BAA-258).